The following is an 82-amino-acid chain: MTDKIRTLQGRVISDKMDKSITVAIERKVKHPIYGKIIKRTTKLHVHDENNECKAGDLVEIRECRPLSKTKSWTLVAVVEKA.

This sequence belongs to the universal ribosomal protein uS17 family. Part of the 30S ribosomal subunit.

Its function is as follows. One of the primary rRNA binding proteins, it binds specifically to the 5'-end of 16S ribosomal RNA. The chain is Small ribosomal subunit protein uS17 from Aeromonas hydrophila subsp. hydrophila (strain ATCC 7966 / DSM 30187 / BCRC 13018 / CCUG 14551 / JCM 1027 / KCTC 2358 / NCIMB 9240 / NCTC 8049).